The chain runs to 210 residues: MIPSSPFLCFITDESRSPIILARKALEGGASMIQLRHKSADGDQLYHWSVAIQALCRKHKAIFIVNDRVDIALAAGADGVHLGQQDLPADAARKLLGKDRIMGISVSSPLEALAAEKNGADYVGFGHIFPTSSKDKKNTPVGPESIADIKAIITIPIIAIGGITGCNAQLPIRAGAAGIAVIAAVSRAADPEIAARELVGILQKNIEHNR.

4-amino-2-methyl-5-(diphosphooxymethyl)pyrimidine contacts are provided by residues 34 to 38 (QLRHK) and asparagine 66. Residues aspartate 67 and aspartate 86 each coordinate Mg(2+). Position 105 (serine 105) interacts with 4-amino-2-methyl-5-(diphosphooxymethyl)pyrimidine. Residue 131-133 (TSS) participates in 2-[(2R,5Z)-2-carboxy-4-methylthiazol-5(2H)-ylidene]ethyl phosphate binding. Lysine 134 contributes to the 4-amino-2-methyl-5-(diphosphooxymethyl)pyrimidine binding site. Glycine 162 is a binding site for 2-[(2R,5Z)-2-carboxy-4-methylthiazol-5(2H)-ylidene]ethyl phosphate.

This sequence belongs to the thiamine-phosphate synthase family. It depends on Mg(2+) as a cofactor.

The catalysed reaction is 2-[(2R,5Z)-2-carboxy-4-methylthiazol-5(2H)-ylidene]ethyl phosphate + 4-amino-2-methyl-5-(diphosphooxymethyl)pyrimidine + 2 H(+) = thiamine phosphate + CO2 + diphosphate. It catalyses the reaction 2-(2-carboxy-4-methylthiazol-5-yl)ethyl phosphate + 4-amino-2-methyl-5-(diphosphooxymethyl)pyrimidine + 2 H(+) = thiamine phosphate + CO2 + diphosphate. It carries out the reaction 4-methyl-5-(2-phosphooxyethyl)-thiazole + 4-amino-2-methyl-5-(diphosphooxymethyl)pyrimidine + H(+) = thiamine phosphate + diphosphate. It functions in the pathway cofactor biosynthesis; thiamine diphosphate biosynthesis; thiamine phosphate from 4-amino-2-methyl-5-diphosphomethylpyrimidine and 4-methyl-5-(2-phosphoethyl)-thiazole: step 1/1. Functionally, condenses 4-methyl-5-(beta-hydroxyethyl)thiazole monophosphate (THZ-P) and 2-methyl-4-amino-5-hydroxymethyl pyrimidine pyrophosphate (HMP-PP) to form thiamine monophosphate (TMP). This Chlorobium limicola (strain DSM 245 / NBRC 103803 / 6330) protein is Thiamine-phosphate synthase.